A 356-amino-acid chain; its full sequence is Peptide chain release factor 1 (356 aa).

Position 233 is an N5-methylglutamine (Q233).

This sequence belongs to the prokaryotic/mitochondrial release factor family. In terms of processing, methylated by PrmC. Methylation increases the termination efficiency of RF1.

The protein resides in the cytoplasm. Peptide chain release factor 1 directs the termination of translation in response to the peptide chain termination codons UAG and UAA. The sequence is that of Peptide chain release factor 1 from Syntrophotalea carbinolica (strain DSM 2380 / NBRC 103641 / GraBd1) (Pelobacter carbinolicus).